A 342-amino-acid chain; its full sequence is Ketol-acid reductoisomerase (NADP(+)) (342 aa).

A KARI N-terminal Rossmann domain is found at 2 to 182 (AEIYYDNDAD…GGLRAGGIKT (181 aa)). Residues 25–28 (YGSQ), lysine 48, serine 51, serine 53, and 83–86 (DQVQ) contribute to the NADP(+) site. Residue histidine 108 is part of the active site. Glycine 134 contributes to the NADP(+) binding site. Positions 183 to 328 (TFTEETETDL…RELRKLFAWN (146 aa)) constitute a KARI C-terminal knotted domain. 4 residues coordinate Mg(2+): aspartate 191, glutamate 195, glutamate 227, and glutamate 231. Substrate is bound at residue serine 252.

This sequence belongs to the ketol-acid reductoisomerase family. The cofactor is Mg(2+).

The catalysed reaction is (2R)-2,3-dihydroxy-3-methylbutanoate + NADP(+) = (2S)-2-acetolactate + NADPH + H(+). It carries out the reaction (2R,3R)-2,3-dihydroxy-3-methylpentanoate + NADP(+) = (S)-2-ethyl-2-hydroxy-3-oxobutanoate + NADPH + H(+). It functions in the pathway amino-acid biosynthesis; L-isoleucine biosynthesis; L-isoleucine from 2-oxobutanoate: step 2/4. Its pathway is amino-acid biosynthesis; L-valine biosynthesis; L-valine from pyruvate: step 2/4. In terms of biological role, involved in the biosynthesis of branched-chain amino acids (BCAA). Catalyzes an alkyl-migration followed by a ketol-acid reduction of (S)-2-acetolactate (S2AL) to yield (R)-2,3-dihydroxy-isovalerate. In the isomerase reaction, S2AL is rearranged via a Mg-dependent methyl migration to produce 3-hydroxy-3-methyl-2-ketobutyrate (HMKB). In the reductase reaction, this 2-ketoacid undergoes a metal-dependent reduction by NADPH to yield (R)-2,3-dihydroxy-isovalerate. This chain is Ketol-acid reductoisomerase (NADP(+)), found in Leifsonia xyli subsp. xyli (strain CTCB07).